Here is a 384-residue protein sequence, read N- to C-terminus: Probable L-tyrosine/L-aspartate decarboxylase (384 aa).

Lys-233 bears the N6-(pyridoxal phosphate)lysine mark.

This sequence belongs to the group II decarboxylase family. MfnA subfamily. Pyridoxal 5'-phosphate serves as cofactor.

The catalysed reaction is L-tyrosine + H(+) = tyramine + CO2. It carries out the reaction L-aspartate + H(+) = beta-alanine + CO2. Its pathway is cofactor biosynthesis; methanofuran biosynthesis. It functions in the pathway cofactor biosynthesis; coenzyme A biosynthesis. Its function is as follows. Catalyzes the decarboxylation of L-tyrosine to produce tyramine for methanofuran biosynthesis. Can also catalyze the decarboxylation of L-aspartate to produce beta-alanine for coenzyme A (CoA) biosynthesis. This Methanococcus maripaludis (strain DSM 14266 / JCM 13030 / NBRC 101832 / S2 / LL) protein is Probable L-tyrosine/L-aspartate decarboxylase.